Consider the following 557-residue polypeptide: Urocanate hydratase (557 aa).

NAD(+) contacts are provided by residues 52-53 (GG), Gln130, 176-178 (GMG), Glu196, 242-243 (NA), 263-267 (QTSAH), 273-274 (YL), and Tyr322. Cys410 is a catalytic residue. Gly492 is an NAD(+) binding site.

The protein belongs to the urocanase family. NAD(+) is required as a cofactor.

The protein localises to the cytoplasm. The enzyme catalyses 4-imidazolone-5-propanoate = trans-urocanate + H2O. It functions in the pathway amino-acid degradation; L-histidine degradation into L-glutamate; N-formimidoyl-L-glutamate from L-histidine: step 2/3. Catalyzes the conversion of urocanate to 4-imidazolone-5-propionate. This Rhizobium meliloti (strain 1021) (Ensifer meliloti) protein is Urocanate hydratase.